A 319-amino-acid polypeptide reads, in one-letter code: Glycine--tRNA ligase alpha subunit (319 aa).

Residues 290-319 are disordered; the sequence is RQQQPEAPAPGPAAVVGGRDRKDACDVKEG. A compositionally biased stretch (basic and acidic residues) spans 307–319; sequence GRDRKDACDVKEG.

This sequence belongs to the class-II aminoacyl-tRNA synthetase family. Tetramer of two alpha and two beta subunits.

The protein resides in the cytoplasm. The enzyme catalyses tRNA(Gly) + glycine + ATP = glycyl-tRNA(Gly) + AMP + diphosphate. This Moorella thermoacetica (strain ATCC 39073 / JCM 9320) protein is Glycine--tRNA ligase alpha subunit.